Reading from the N-terminus, the 251-residue chain is Elongator complex protein 6 (251 aa).

The protein belongs to the ELP6 family. Component of the elongator complex composed of Elp1, Elp2, Elp3, Elp4, Elp5 and Elp6. The elongator complex associates with and stabilizes microtubules; efficient interaction requires the full complex. Interacts with InR/Insulin-like receptor; the interaction may stabilize Elp6.

It localises to the cytoplasm. The protein localises to the nucleus. Its subcellular location is the cytoskeleton. The protein resides in the spindle. Its pathway is tRNA modification; 5-methoxycarbonylmethyl-2-thiouridine-tRNA biosynthesis. Its function is as follows. Component of the elongator complex, which is required for multiple tRNA modifications, including mcm5U (5-methoxycarbonylmethyl uridine), mcm5s2U (5-methoxycarbonylmethyl-2-thiouridine), and ncm5U (5-carbamoylmethyl uridine). The elongator complex catalyzes formation of carboxymethyluridine in the wobble base at position 34 in tRNAs. Binding by the elongator complex stabilizes microtubules and promotes their growth. This induces central spindle asymmetry, promoting polarized signaling endosome trafficking during asymmetric cell division and cell fate assignation of sensory organ precursor cells. Required in germ line cells for microtubule organization involved in oocyte polarization and chromosome organization. Involved in InR-TOR (insulin-like receptor-target of rapamycin) signaling regulation of cellular metabolism, autophagy and apoptosis. This chain is Elongator complex protein 6, found in Drosophila melanogaster (Fruit fly).